A 235-amino-acid polypeptide reads, in one-letter code: Biosynthetic peptidoglycan transglycosylase (235 aa).

A helical transmembrane segment spans residues 12-34 (GLGKLLLAALLSTIVSVALLRFI).

It belongs to the glycosyltransferase 51 family.

It localises to the cell inner membrane. It carries out the reaction [GlcNAc-(1-&gt;4)-Mur2Ac(oyl-L-Ala-gamma-D-Glu-L-Lys-D-Ala-D-Ala)](n)-di-trans,octa-cis-undecaprenyl diphosphate + beta-D-GlcNAc-(1-&gt;4)-Mur2Ac(oyl-L-Ala-gamma-D-Glu-L-Lys-D-Ala-D-Ala)-di-trans,octa-cis-undecaprenyl diphosphate = [GlcNAc-(1-&gt;4)-Mur2Ac(oyl-L-Ala-gamma-D-Glu-L-Lys-D-Ala-D-Ala)](n+1)-di-trans,octa-cis-undecaprenyl diphosphate + di-trans,octa-cis-undecaprenyl diphosphate + H(+). The protein operates within cell wall biogenesis; peptidoglycan biosynthesis. In terms of biological role, peptidoglycan polymerase that catalyzes glycan chain elongation from lipid-linked precursors. The polypeptide is Biosynthetic peptidoglycan transglycosylase (Aeromonas hydrophila subsp. hydrophila (strain ATCC 7966 / DSM 30187 / BCRC 13018 / CCUG 14551 / JCM 1027 / KCTC 2358 / NCIMB 9240 / NCTC 8049)).